A 1152-amino-acid chain; its full sequence is Alpha-mannosidase 2x (1152 aa).

The Cytoplasmic portion of the chain corresponds to 1 to 5 (MKLKK). The helical; Signal-anchor for type II membrane protein transmembrane segment at 6 to 26 (QVTVCGAAIFCVAVFSLYLML) threads the bilayer. Residues 27-796 (DRVQHDPARH…VDEEQEQQME (770 aa)) lie on the Lumenal side of the membrane. Positions 43 to 74 (PRSQISVLQNRIEQLEQLLEENHDIISRIKDS) form a coiled coil. Residues H175 and D177 each coordinate Zn(2+). N-linked (GlcNAc...) asparagine glycosylation is present at N225. D289 contacts Zn(2+). Catalysis depends on D289, which acts as the Nucleophile. A glycan (N-linked (GlcNAc...) asparagine) is linked at N305. H569 provides a ligand contact to Zn(2+).

This sequence belongs to the glycosyl hydrolase 38 family. As to quaternary structure, homodimer; disulfide-linked. Interacts with MGAT4D. Zn(2+) serves as cofactor.

It is found in the golgi apparatus membrane. The enzyme catalyses N(4)-{beta-D-GlcNAc-(1-&gt;2)-alpha-D-Man-(1-&gt;3)-[alpha-D-Man-(1-&gt;3)-[alpha-D-Man-(1-&gt;6)]-alpha-D-Man-(1-&gt;6)]-beta-D-Man-(1-&gt;4)-beta-D-GlcNAc-(1-&gt;4)-beta-D-GlcNAc}-L-asparaginyl-[protein] + 2 H2O = 2 alpha-D-mannopyranose + an N(4)-{beta-D-GlcNAc-(1-&gt;2)-alpha-D-Man-(1-&gt;3)-[alpha-D-Man-(1-&gt;6)]-beta-D-Man-(1-&gt;4)-beta-D-GlcNAc-(1-&gt;4)-beta-D-GlcNAc}-L-asparaginyl-[protein]. It participates in protein modification; protein glycosylation. Functionally, catalyzes the first committed step in the biosynthesis of complex N-glycans. It controls conversion of high mannose to complex N-glycans; the final hydrolytic step in the N-glycan maturation pathway. The protein is Alpha-mannosidase 2x (Man2a2) of Mus musculus (Mouse).